A 691-amino-acid chain; its full sequence is 1,4-alpha-glucan-branching enzyme (691 aa).

Positions 80 and 116 each coordinate (1,4-alpha-D-glucosyl)n. Asp-333 serves as the catalytic Nucleophile. Residue Glu-398 is the Proton donor of the active site.

Belongs to the glycosyl hydrolase 13 family. GlgB subfamily.

It localises to the cytoplasm. It carries out the reaction Transfers a segment of a (1-&gt;4)-alpha-D-glucan chain to a primary hydroxy group in a similar glucan chain.. It participates in glycan biosynthesis; glycogen biosynthesis. Functionally, glycogen-branching enzyme participates in the glycogen biosynthetic process along with glycogenin and glycogen synthase. Generates alpha-1,6-glucosidic branches from alpha-1,4-linked glucose chains, to increase solubility of the glycogen polymer. In Yarrowia lipolytica (strain CLIB 122 / E 150) (Yeast), this protein is 1,4-alpha-glucan-branching enzyme (GLC3).